The sequence spans 1944 residues: Anaphase-promoting complex subunit 1 (1944 aa).

Ser51, Ser60, Ser202, and Ser286 each carry phosphoserine. Phosphothreonine is present on Thr291. The interval 305–343 (LRSLSKGDSPVTSPFQNYSSIHSQSRSTSSPSLHSRSPS) is disordered. Ser313, Ser341, Ser343, Ser355, Ser362, Ser373, and Ser377 each carry phosphoserine. A compositionally biased stretch (low complexity) spans 323–343 (SSIHSQSRSTSSPSLHSRSPS). Positions 373–396 (SHNQSPKRHSISHSPNSNSNGSFL) are disordered. A compositionally biased stretch (low complexity) spans 384–394 (SHSPNSNSNGS). The residue at position 537 (Thr537) is a Phosphothreonine. Phosphoserine is present on residues Ser547 and Ser555. At Tyr571 the chain carries Phosphotyrosine. Residues Ser686, Ser688, and Ser916 each carry the phosphoserine modification. Positions 994 to 1016 (KGKSVLSSDVPSGTETEEEDDGM) are disordered. Polar residues predominate over residues 998–1007 (VLSSDVPSGT). 4 PC repeats span residues 1297–1325 (AAGL…PEQL), 1366–1404 (GATL…PEFL), 1467–1501 (GACL…YLSA), and 1520–1552 (LLSL…EMNY).

The protein belongs to the APC1 family. In terms of assembly, the mammalian APC/C is composed at least of 14 distinct subunits ANAPC1, ANAPC2, CDC27/APC3, ANAPC4, ANAPC5, CDC16/APC6, ANAPC7, CDC23/APC8, ANAPC10, ANAPC11, CDC26/APC12, ANAPC13, ANAPC15 and ANAPC16 that assemble into a complex of at least 19 chains with a combined molecular mass of around 1.2 MDa; APC/C interacts with FZR1 and FBXO5. Post-translationally, phosphorylated. Phosphorylation on Ser-355 occurs specifically during mitosis.

It participates in protein modification; protein ubiquitination. Component of the anaphase promoting complex/cyclosome (APC/C), a cell cycle-regulated E3 ubiquitin ligase that controls progression through mitosis and the G1 phase of the cell cycle. The APC/C complex acts by mediating ubiquitination and subsequent degradation of target proteins: it mainly mediates the formation of 'Lys-11'-linked polyubiquitin chains and, to a lower extent, the formation of 'Lys-48'- and 'Lys-63'-linked polyubiquitin chains. The APC/C complex catalyzes assembly of branched 'Lys-11'-/'Lys-48'-linked branched ubiquitin chains on target proteins. The polypeptide is Anaphase-promoting complex subunit 1 (ANAPC1) (Homo sapiens (Human)).